Reading from the N-terminus, the 329-residue chain is Peroxidase 18 (329 aa).

A signal peptide spans 1–29; that stretch reads MALQFFSCKPKYTFLSSLLLLLLLSSSVA. 4 cysteine pairs are disulfide-bonded: Cys-40–Cys-116, Cys-73–Cys-78, Cys-122–Cys-325, and Cys-201–Cys-235. Residue His-71 is the Proton acceptor of the active site. Positions 72, 75, 77, 79, and 81 each coordinate Ca(2+). Residue Asn-87 is glycosylated (N-linked (GlcNAc...) asparagine). Ile-164 is a binding site for substrate. His-194 provides a ligand contact to heme b. Thr-195 contacts Ca(2+). Ca(2+)-binding residues include Asp-249, Thr-252, and Asp-257.

The protein belongs to the peroxidase family. Classical plant (class III) peroxidase subfamily. Heme b serves as cofactor. Ca(2+) is required as a cofactor.

It localises to the secreted. It carries out the reaction 2 a phenolic donor + H2O2 = 2 a phenolic radical donor + 2 H2O. Functionally, removal of H(2)O(2), oxidation of toxic reductants, biosynthesis and degradation of lignin, suberization, auxin catabolism, response to environmental stresses such as wounding, pathogen attack and oxidative stress. These functions might be dependent on each isozyme/isoform in each plant tissue. The protein is Peroxidase 18 (PER18) of Arabidopsis thaliana (Mouse-ear cress).